The following is a 184-amino-acid chain: F(420)H(2) dehydrogenase subunit B (184 aa).

The segment at 1 to 20 is disordered; the sequence is MGEVKETKTNNSKENPEEEV. Residues Cys-61, Cys-62, Cys-126, and Cys-156 each coordinate [4Fe-4S] cluster.

It belongs to the complex I 20 kDa subunit family. The FPO complex is composed of at least 13 different subunits. Requires FAD as cofactor. The cofactor is [4Fe-4S] cluster.

It localises to the cell inner membrane. The enzyme catalyses methanophenazine + reduced coenzyme F420-(gamma-L-Glu)(n) = dihydromethanophenazine + oxidized coenzyme F420-(gamma-L-Glu)(n) + H(+). Functionally, component of the F(420)H(2) dehydrogenase (FPO complex) which is part of the energy-conserving F(420)H(2):heterodisulfide oxidoreductase system. The membrane-bound electron transfer system of the complex plays an important role in the metabolism of methylotrophic methanogens when the organisms grow on methanol or methylamines. Catalyzes the oxidation of methanophenazine to dihydromethanophenazine. It shuttles electrons from F(420)H(2), via FAD and iron-sulfur (Fe-S) centers, to methanophenazine (an electron carrier in the membrane). It couples the redox reaction to proton translocation (for every two electrons transferred, two hydrogen ions are translocated across the cytoplasmic membrane), and thus conserves the redox energy in a proton gradient. It also catalyzes the oxidation of F(420)H(2) with quinones such as 2,3-dimethyl-1,4-naphthoquinone, 2-methyl-1,4-naphthoquinone and tetramethyl-p-benzoquinone. The chain is F(420)H(2) dehydrogenase subunit B (fpoB) from Methanosarcina mazei (strain ATCC BAA-159 / DSM 3647 / Goe1 / Go1 / JCM 11833 / OCM 88) (Methanosarcina frisia).